A 515-amino-acid polypeptide reads, in one-letter code: ATP synthase subunit alpha (515 aa).

169–176 (GDRQTGKT) is a binding site for ATP.

It belongs to the ATPase alpha/beta chains family. As to quaternary structure, F-type ATPases have 2 components, CF(1) - the catalytic core - and CF(0) - the membrane proton channel. CF(1) has five subunits: alpha(3), beta(3), gamma(1), delta(1), epsilon(1). CF(0) has three main subunits: a(1), b(2) and c(9-12). The alpha and beta chains form an alternating ring which encloses part of the gamma chain. CF(1) is attached to CF(0) by a central stalk formed by the gamma and epsilon chains, while a peripheral stalk is formed by the delta and b chains.

It localises to the cell inner membrane. It catalyses the reaction ATP + H2O + 4 H(+)(in) = ADP + phosphate + 5 H(+)(out). Its function is as follows. Produces ATP from ADP in the presence of a proton gradient across the membrane. The alpha chain is a regulatory subunit. This Neisseria meningitidis serogroup C (strain 053442) protein is ATP synthase subunit alpha.